The chain runs to 229 residues: Histone H3-like centromeric protein CSE4 (229 aa).

Polar residues predominate over residues 1-35 (MSSKQQWVSSAIQSDSSGRSLSNVNRLAGDQQSIN). Residues 1–78 (MSSKQQWVSS…DIETDYEDQA (78 aa)) are disordered. Residues 53–68 (PRREERRRYESSKSDL) show a composition bias toward basic and acidic residues. A Nuclear localization signal motif is present at residues 115–132 (KRREKQRKQSLKRVEKKY). The H3-like stretch occupies residues 132–229 (YTPSELALYE…LARRIRGQFI (98 aa)).

The protein belongs to the histone H3 family. Component of centromeric nucleosomes, where DNA is wrapped around a histone octamer core. The octamer contains two molecules each of H2A, H2B, CSE4/CENPA and H4 assembled in one CSE4-H4 heterotetramer and two H2A-H2B heterodimers. Interacts with the inner kinetochore. Interacts with the central kinetochore protein CTF19. Interacts with YTA7. Ubiquitinated. Is degraded through ubiquitin-mediated proteolysis when not protected by its association to the kinetochore.

The protein resides in the nucleus. It localises to the chromosome. The protein localises to the centromere. Functionally, histone H3-like nucleosomal protein that is specifically found in centromeric nucleosomes. Replaces conventional H3 in the nucleosome core of centromeric chromatin that serves as an assembly site for the inner kinetochore. Required for recruitment and assembly of kinetochore proteins, mitotic progression and chromosome segregation. May serve as an epigenetic mark that propagates centromere identity through replication and cell division. Required for functional chromatin architecture at the yeast 2-micron circle partitioning locus and promotes equal plasmid segregation. The sequence is that of Histone H3-like centromeric protein CSE4 (CSE4) from Saccharomyces cerevisiae (strain ATCC 204508 / S288c) (Baker's yeast).